A 211-amino-acid chain; its full sequence is LexA repressor (211 aa).

Residues 27–47 (QTEIARAFGFKGVRAVQHHLD) constitute a DNA-binding region (H-T-H motif). Catalysis depends on for autocatalytic cleavage activity residues serine 131 and lysine 168.

This sequence belongs to the peptidase S24 family. Homodimer.

It carries out the reaction Hydrolysis of Ala-|-Gly bond in repressor LexA.. Represses a number of genes involved in the response to DNA damage (SOS response), including recA and lexA. In the presence of single-stranded DNA, RecA interacts with LexA causing an autocatalytic cleavage which disrupts the DNA-binding part of LexA, leading to derepression of the SOS regulon and eventually DNA repair. The protein is LexA repressor of Xylella fastidiosa (strain M12).